A 283-amino-acid polypeptide reads, in one-letter code: MSSRENYVYNRNPVFTAPKNNKRRPSFICYAMKKASEIDVARCELNYVIQPKNIKTGLPLKRFRRLNEHRACALRAMVSAMLYHFNISSELVQASVEQLSDECGLSTLSKVGNKSITRASRLITNFMEPMGFVTCKKIWDRVLGNYMPKMITLTPLFFMLLDISEKQLINAKKQQLGWINKNLITKGLKPITVIEAKRRAKDIQMRNLFKYRISKHNFYKKRKNAQRLIALDEKEARQKILRALVAKYSISELTTLGPSGLKKQVNISYYYLKKIATNRYPDN.

The protein belongs to the IncFII RepA family.

This protein is essential for plasmid replication; it is involved in copy control functions. The sequence is that of Probable replication-associated protein repA1 (repA1) from Buchnera aphidicola subsp. Schizaphis graminum (strain Sg).